Reading from the N-terminus, the 135-residue chain is Small ribosomal subunit protein bS6 (135 aa).

The segment at 104–135 is disordered; it reads FSRLDRNGHIGHDEKHPRSPSRQREDVIEGVE.

This sequence belongs to the bacterial ribosomal protein bS6 family.

Its function is as follows. Binds together with bS18 to 16S ribosomal RNA. This Bartonella henselae (strain ATCC 49882 / DSM 28221 / CCUG 30454 / Houston 1) (Rochalimaea henselae) protein is Small ribosomal subunit protein bS6.